We begin with the raw amino-acid sequence, 636 residues long: Threonine--tRNA ligase (636 aa).

The region spanning 1–63 is the TGS domain; that stretch reads MINITTSFPN…SKDGSVDPVT (63 aa). The segment at 244–535 is catalytic; sequence DHRKIAKDLG…LIEHYAGNIP (292 aa). Positions 335, 386, and 512 each coordinate Zn(2+).

It belongs to the class-II aminoacyl-tRNA synthetase family. In terms of assembly, homodimer. The cofactor is Zn(2+).

The protein localises to the cytoplasm. It catalyses the reaction tRNA(Thr) + L-threonine + ATP = L-threonyl-tRNA(Thr) + AMP + diphosphate + H(+). Functionally, catalyzes the attachment of threonine to tRNA(Thr) in a two-step reaction: L-threonine is first activated by ATP to form Thr-AMP and then transferred to the acceptor end of tRNA(Thr). Also edits incorrectly charged L-seryl-tRNA(Thr). The protein is Threonine--tRNA ligase of Anaplasma marginale (strain St. Maries).